A 103-amino-acid polypeptide reads, in one-letter code: Large ribosomal subunit protein uL23 (103 aa).

The protein belongs to the universal ribosomal protein uL23 family. As to quaternary structure, part of the 50S ribosomal subunit. Contacts protein L29, and trigger factor when it is bound to the ribosome.

In terms of biological role, one of the early assembly proteins it binds 23S rRNA. One of the proteins that surrounds the polypeptide exit tunnel on the outside of the ribosome. Forms the main docking site for trigger factor binding to the ribosome. The protein is Large ribosomal subunit protein uL23 of Chlorobium phaeobacteroides (strain DSM 266 / SMG 266 / 2430).